Consider the following 146-residue polypeptide: Myoglobin (146 aa).

The 140-residue stretch at Gly-2 to Lys-141 folds into the Globin domain. His-60 serves as a coordination point for nitrite. Position 60 (His-60) interacts with O2. His-89 is a binding site for heme b.

The protein belongs to the globin family. As to quaternary structure, monomeric.

The protein localises to the cytoplasm. Its subcellular location is the sarcoplasm. The enzyme catalyses Fe(III)-heme b-[protein] + nitric oxide + H2O = Fe(II)-heme b-[protein] + nitrite + 2 H(+). It carries out the reaction H2O2 + AH2 = A + 2 H2O. Its function is as follows. Monomeric heme protein which primary function is to store oxygen and facilitate its diffusion within muscle tissues. Reversibly binds oxygen through a pentacoordinated heme iron and enables its timely and efficient release as needed during periods of heightened demand. Depending on the oxidative conditions of tissues and cells, and in addition to its ability to bind oxygen, it also has a nitrite reductase activity whereby it regulates the production of bioactive nitric oxide. Under stress conditions, like hypoxia and anoxia, it also protects cells against reactive oxygen species thanks to its pseudoperoxidase activity. This Tetraodon nigroviridis (Spotted green pufferfish) protein is Myoglobin (mb).